The primary structure comprises 284 residues: RNase adapter protein RapZ (284 aa).

An ATP-binding site is contributed by 8-15; it reads GRSGSGKS. 56-59 contributes to the GTP binding site; the sequence is DVRN. The tract at residues 266–284 is RNA-binding; that stretch reads RSRGKNVQSRHRTLEKRKT.

The protein belongs to the RapZ-like family. RapZ subfamily. Homotrimer.

In terms of biological role, modulates the synthesis of GlmS, by affecting the processing and stability of the regulatory small RNA GlmZ. When glucosamine-6-phosphate (GlcN6P) concentrations are high in the cell, RapZ binds GlmZ and targets it to cleavage by RNase E. Consequently, GlmZ is inactivated and unable to activate GlmS synthesis. Under low GlcN6P concentrations, RapZ is sequestered and inactivated by an other regulatory small RNA, GlmY, preventing GlmZ degradation and leading to synthesis of GlmS. The protein is RNase adapter protein RapZ of Salmonella typhimurium (strain LT2 / SGSC1412 / ATCC 700720).